The following is a 108-amino-acid chain: Small ribosomal subunit protein eS25x (108 aa).

Residues 1-36 form a disordered region; the sequence is MAPKKDKVPPPSSKPAKSGGGKQKKKKWSKGKQKEK. The segment covering 22–31 has biased composition (basic residues); sequence KQKKKKWSKG.

This sequence belongs to the eukaryotic ribosomal protein eS25 family.

This is Small ribosomal subunit protein eS25x (RPS25D) from Arabidopsis thaliana (Mouse-ear cress).